The sequence spans 142 residues: Large-conductance mechanosensitive channel (142 aa).

Helical transmembrane passes span 10-30 (FAVKGNVVDLAVGVIIGGAFG), 40-60 (LIMPVVGLVFGKLDFSNLFVV), and 86-106 (GNFITVAVNFIILAFIIFMMV).

This sequence belongs to the MscL family. As to quaternary structure, homopentamer.

It is found in the cell inner membrane. Channel that opens in response to stretch forces in the membrane lipid bilayer. May participate in the regulation of osmotic pressure changes within the cell. The chain is Large-conductance mechanosensitive channel from Delftia acidovorans (strain DSM 14801 / SPH-1).